The following is a 190-amino-acid chain: uncharacterized protein (190 aa).

An N-terminal signal peptide occupies residues 1 to 18; it reads MKLVHMASGLAVAIALAA. Cys-19 carries N-palmitoyl cysteine lipidation. The S-diacylglycerol cysteine moiety is linked to residue Cys-19. Over residues 162 to 182 the composition is skewed to low complexity; sequence ASGGATTTVPSTSPTQVNPSS. Positions 162–190 are disordered; the sequence is ASGGATTTVPSTSPTQVNPSSAVPAPTQY.

It localises to the cell membrane. This is an uncharacterized protein from Escherichia coli (strain K12).